The primary structure comprises 143 residues: Anti-sigma F factor (143 aa).

The protein belongs to the anti-sigma-factor family.

It carries out the reaction L-seryl-[protein] + ATP = O-phospho-L-seryl-[protein] + ADP + H(+). It catalyses the reaction L-threonyl-[protein] + ATP = O-phospho-L-threonyl-[protein] + ADP + H(+). In terms of biological role, binds to sigma F and blocks its ability to form an RNA polymerase holoenzyme (E-sigma F). Phosphorylates SpoIIAA on a serine residue. This phosphorylation may enable SpoIIAA to act as an anti-anti-sigma factor that counteracts SpoIIAB and thus releases sigma F from inhibition. The protein is Anti-sigma F factor of Clostridium botulinum (strain Eklund 17B / Type B).